A 376-amino-acid chain; its full sequence is uncharacterized protein (376 aa).

A helical membrane pass occupies residues 19-39 (FVLISLILLLNLGLLLGIQIY).

The protein to S.pombe SpAC5H10.12c.

The protein localises to the cytoplasm. It localises to the nucleus. Its subcellular location is the membrane. This is an uncharacterized protein from Schizosaccharomyces pombe (strain 972 / ATCC 24843) (Fission yeast).